A 147-amino-acid polypeptide reads, in one-letter code: 3-hydroxyacyl-[acyl-carrier-protein] dehydratase FabZ (147 aa).

The active site involves histidine 48.

The protein belongs to the thioester dehydratase family. FabZ subfamily.

It is found in the cytoplasm. The enzyme catalyses a (3R)-hydroxyacyl-[ACP] = a (2E)-enoyl-[ACP] + H2O. In terms of biological role, involved in unsaturated fatty acids biosynthesis. Catalyzes the dehydration of short chain beta-hydroxyacyl-ACPs and long chain saturated and unsaturated beta-hydroxyacyl-ACPs. This chain is 3-hydroxyacyl-[acyl-carrier-protein] dehydratase FabZ, found in Aliarcobacter butzleri (strain RM4018) (Arcobacter butzleri).